The primary structure comprises 242 residues: Probable transcriptional regulatory protein Bphy_2064 (242 aa).

Belongs to the TACO1 family.

It localises to the cytoplasm. This is Probable transcriptional regulatory protein Bphy_2064 from Paraburkholderia phymatum (strain DSM 17167 / CIP 108236 / LMG 21445 / STM815) (Burkholderia phymatum).